We begin with the raw amino-acid sequence, 59 residues long: Putative conotoxin (59 aa).

The signal sequence occupies residues 1 to 25 (MGMRMMFTVFLLVVLATTVVPITLA). Residues 26-47 (SATDGRNAAANARVSPVISKSS) constitute a propeptide that is removed on maturation.

The protein belongs to the conotoxin A superfamily. Expressed by the venom duct.

It localises to the secreted. Its function is as follows. Acts as a neurotoxin. The polypeptide is Putative conotoxin (Conus imperialis (Imperial cone)).